The primary structure comprises 478 residues: Transposon Ty1-H Gag polyprotein (478 aa).

Polar residues-rich tracts occupy residues 1-10, 48-60, and 127-152; these read MESQQLSNYP, TKANSQQTTTPAS, and QSQFPQYPSSVGTPLSTPSPESGNTF. Disordered stretches follow at residues 1–84, 126–174, and 390–478; these read MESQ…QNGP, PQSQ…PPPM, and GSRN…PETY. The span at 153–165 shows a compositional bias: low complexity; that stretch reads TDSSSADSDMTST. The segment at 337–439 is RNA-binding; that stretch reads NNGIHINNKV…NSKSKTARAH (103 aa). A compositionally biased stretch (low complexity) spans 440-456; it reads NVSTSNNSPSTDNDSIS. The span at 457-466 shows a compositional bias: polar residues; sequence KSTTEPIQLN. The span at 467 to 478 shows a compositional bias: basic and acidic residues; that stretch reads NKHDLHLRPETY.

In terms of assembly, homotrimer.

Its subcellular location is the cytoplasm. Functionally, capsid protein (CA) is the structural component of the virus-like particle (VLP), forming the shell that encapsulates the retrotransposons dimeric RNA genome. The particles are assembled from trimer-clustered units and there are holes in the capsid shells that allow for the diffusion of macromolecules. CA also has nucleocapsid-like chaperone activity, promoting primer tRNA(i)-Met annealing to the multipartite primer-binding site (PBS), dimerization of Ty1 RNA and initiation of reverse transcription. The chain is Transposon Ty1-H Gag polyprotein (TY1A-H) from Saccharomyces cerevisiae (strain ATCC 204508 / S288c) (Baker's yeast).